We begin with the raw amino-acid sequence, 534 residues long: CTP synthase (534 aa).

The interval Met1–Leu267 is amidoligase domain. Ser13 lines the CTP pocket. Ser13 lines the UTP pocket. Ser14 to Ile19 contributes to the ATP binding site. L-glutamine is bound at residue Tyr54. Asp71 serves as a coordination point for ATP. Mg(2+)-binding residues include Asp71 and Glu141. CTP contacts are provided by residues Asp148–Glu150, Lys188–Gln193, and Lys224. Residues Lys188–Gln193 and Lys224 each bind UTP. Residues Lys292–Lys534 form the Glutamine amidotransferase type-1 domain. Residue Gly354 participates in L-glutamine binding. Catalysis depends on Cys381, which acts as the Nucleophile; for glutamine hydrolysis. L-glutamine contacts are provided by residues Leu382–Gln385, Glu405, and Arg463. Residues His508 and Glu510 contribute to the active site.

It belongs to the CTP synthase family. In terms of assembly, homotetramer.

It catalyses the reaction UTP + L-glutamine + ATP + H2O = CTP + L-glutamate + ADP + phosphate + 2 H(+). The enzyme catalyses L-glutamine + H2O = L-glutamate + NH4(+). It carries out the reaction UTP + NH4(+) + ATP = CTP + ADP + phosphate + 2 H(+). It participates in pyrimidine metabolism; CTP biosynthesis via de novo pathway; CTP from UDP: step 2/2. Its activity is regulated as follows. Allosterically activated by GTP, when glutamine is the substrate; GTP has no effect on the reaction when ammonia is the substrate. The allosteric effector GTP functions by stabilizing the protein conformation that binds the tetrahedral intermediate(s) formed during glutamine hydrolysis. Inhibited by the product CTP, via allosteric rather than competitive inhibition. Its function is as follows. Catalyzes the ATP-dependent amination of UTP to CTP with either L-glutamine or ammonia as the source of nitrogen. Regulates intracellular CTP levels through interactions with the four ribonucleotide triphosphates. In Streptococcus thermophilus (strain CNRZ 1066), this protein is CTP synthase.